We begin with the raw amino-acid sequence, 152 residues long: Nucleoside diphosphate kinase (152 aa).

6 residues coordinate ATP: Lys-11, Phe-59, Arg-87, Thr-93, Arg-104, and Asn-114. Catalysis depends on His-117, which acts as the Pros-phosphohistidine intermediate.

This sequence belongs to the NDK family. Homotetramer. The cofactor is Mg(2+).

The protein localises to the cytoplasm. The enzyme catalyses a 2'-deoxyribonucleoside 5'-diphosphate + ATP = a 2'-deoxyribonucleoside 5'-triphosphate + ADP. It catalyses the reaction a ribonucleoside 5'-diphosphate + ATP = a ribonucleoside 5'-triphosphate + ADP. Functionally, major role in the synthesis of nucleoside triphosphates other than ATP. The ATP gamma phosphate is transferred to the NDP beta phosphate via a ping-pong mechanism, using a phosphorylated active-site intermediate. The chain is Nucleoside diphosphate kinase from Prochlorococcus marinus (strain MIT 9312).